Consider the following 278-residue polypeptide: 4-diphosphocytidyl-2-C-methyl-D-erythritol kinase (278 aa).

Lysine 9 is a catalytic residue. ATP is bound at residue 89–99 (PVASGIGGGSA). The active site involves aspartate 128.

The protein belongs to the GHMP kinase family. IspE subfamily.

The enzyme catalyses 4-CDP-2-C-methyl-D-erythritol + ATP = 4-CDP-2-C-methyl-D-erythritol 2-phosphate + ADP + H(+). It participates in isoprenoid biosynthesis; isopentenyl diphosphate biosynthesis via DXP pathway; isopentenyl diphosphate from 1-deoxy-D-xylulose 5-phosphate: step 3/6. Functionally, catalyzes the phosphorylation of the position 2 hydroxy group of 4-diphosphocytidyl-2C-methyl-D-erythritol. In Cereibacter sphaeroides (strain ATCC 17025 / ATH 2.4.3) (Rhodobacter sphaeroides), this protein is 4-diphosphocytidyl-2-C-methyl-D-erythritol kinase.